The following is an 859-amino-acid chain: MQEQYNPSEIEALVQKHWHDNKTFEVTEDANKEKFYCLSMFPYPSGRLHMGHVRNYTIGDVVARFQRLQGKNVLQPIGWDSFGLPAENAAINNKTAPAPWTYENIEYMKNQLKLLGFGYDWSREIATCTPEYYRWEQWFFTKLYEKGLVYKKTASVNWCPNDETVLANEQVQDGCCWRCDTPVEQKEIPQWFIKITAYAEELLNDIDTLDGWPDQVKTMQRNWIGRSEGVEMTFGVAGHDKSFDIYTTRPDTLMGVTYVAIAAGHPLAEIAAQTNPELAAFIDECKNSTTSEAELATMEKRGVATGLFAIHPITGKQVPIWAANFVLMNYGTGAVMSVPGHDQRDFEFAKKYGLAIEAVIKPVDGDVDISEAAYTEKGVLFNSGEFDGLDFEAGFNAIANKLVAEGKGKRQVNYRLRDWGVSRQRYWGAPIPMVTLADGTVIPTPADQLPVLLPEDVVMDGIQSPIKADKEWAKTQVNGQDALRETDTFDTFMESSWYYARYCSPHADEMLDPAKANYWLPVDQYIGGIEHACMHLLYFRFFHKLLRDAGLVNSNEPAKQLLTQGMVLADAFYYINEKGARVWVSPLDVATTEKDDKGRITKAIDKDGNELVYTGMSKMSKSKNNGIDPQVMVEKYGADTVRLFMMFASPPELTLEWQESGVEGAHRFIKRLWKLANEHVNQDNSEALDASKLTSDQKALRREVHKTIAKVTDDIGRRQMFNTAVAAVMELMNHLQKAPQTTGQDNAIIGEALSAIVRLLYPIIPHVSFNLWNELGNASNIEDSQWPVVDEAALVEDSKLIVVQVNGKVRAKITVAADADKESVEALGMSDEHVIKYLDGLTVRKVIYVPGKLLSIVAN.

The 'HIGH' region signature appears at 42–52 (PYPSGRLHMGH). The 'KMSKS' region motif lies at 618–622 (KMSKS). An ATP-binding site is contributed by Lys-621.

This sequence belongs to the class-I aminoacyl-tRNA synthetase family.

It is found in the cytoplasm. It catalyses the reaction tRNA(Leu) + L-leucine + ATP = L-leucyl-tRNA(Leu) + AMP + diphosphate. The polypeptide is Leucine--tRNA ligase (Shewanella baltica (strain OS195)).